Consider the following 342-residue polypeptide: Glycerol-3-phosphate dehydrogenase [NAD(P)+] (342 aa).

The NADPH site is built by serine 13, tryptophan 14, and lysine 108. The sn-glycerol 3-phosphate site is built by lysine 108, glycine 139, and serine 141. Alanine 143 contributes to the NADPH binding site. 5 residues coordinate sn-glycerol 3-phosphate: lysine 194, aspartate 247, serine 257, arginine 258, and asparagine 259. The active-site Proton acceptor is lysine 194. Arginine 258 lines the NADPH pocket. NADPH-binding residues include valine 282 and glutamate 284.

The protein belongs to the NAD-dependent glycerol-3-phosphate dehydrogenase family.

It localises to the cytoplasm. It catalyses the reaction sn-glycerol 3-phosphate + NAD(+) = dihydroxyacetone phosphate + NADH + H(+). The enzyme catalyses sn-glycerol 3-phosphate + NADP(+) = dihydroxyacetone phosphate + NADPH + H(+). It participates in membrane lipid metabolism; glycerophospholipid metabolism. Catalyzes the reduction of the glycolytic intermediate dihydroxyacetone phosphate (DHAP) to sn-glycerol 3-phosphate (G3P), the key precursor for phospholipid synthesis. The protein is Glycerol-3-phosphate dehydrogenase [NAD(P)+] of Lactococcus lactis subsp. cremoris (strain MG1363).